A 1040-amino-acid polypeptide reads, in one-letter code: MQDNVPASGGGPSRLFILRPVATTLLMIAILLAGIIGYRALPVSALPEVDYPTIQVITLYPGASPDVVTSAITAPLERQFGQMSGLKQMSTQSAGGASVITLQFQLELSLDVAEQDVQAAINAASNLLPNDLPYPPTYSKVNPADPPIMTLAVTSSAMSMTQVQDMVDNRIAQKISQVAGVGLVSLAGGQRPAVRVRLNAPALAAYGLTSETIRTAITAANVNSAKGSLDGPTRSVTLSANDQMKSVDDYRKLIVAWKNGAPVRLQDVATIEQAAENIYLGAWANRQQAIIINVQRQPGANVITTTDSINKMLPALKASLPNSVEVATLTDRTTSIRASVKDVQFELLLAIALVVMVIYLFLRNAVATLIPSIAVPLSLVGTFAAMYFLGFSINNLTLMALTIATGFVVDDAIVVIENIARYIEKGEKPLNAALKGAGEIGFTIISLTFSLIAVLIPLLFMGDIVGRLFREFAVTLAVSILISAVVSLTLTPMMCARMLSHQSLRKQNRFTRASERFFTRLIDTYGTWLRKVLNHPWLTLSVALGTLLLTILLYIWIPKGFFPIQDNGIIQGTVQAPQTVSFSNMADRQQRVASIIMKDPTVESVSSFIGVDGTNAALNSGRLQINLKPLSERSERIPEIISRLQQQTAQIPGIQLYLQPVQDLTIDTQISRTQYQFTLQAMSLDELSVWVPKLMTELKKLPQLEDVSSDWQDGAAVAYVNVDRDSASRLGITMSQVDSALYNAFGQRLVSTIYTQASQYRVVLEHDTTNNTGLDALNDVRLISSDGGTIPLSSIATIEERQGPLAINHIDQFPSTTISFNVASGYALGEAVDAITQAEQQMNLPADITTRFQGSTLAFQSALSSTVWLIVAAIVAMYIVLGVLYESFIHPITILSTLPTAGVGALLALMMAGKDLDVIAIIGIILLIGIVKKNAIMMIDFALAAEREQGMKPYDAIYQACLLRFRPILMTTMAALLSALPLMLSTGVGAELRQPLGVCMVGGLIMSQILTLFTTPVIYLLFDRLATRFRRVPRQEEETE.

11 helical membrane-spanning segments follow: residues 15–37, 343–365, 369–391, 398–420, 440–462, 474–496, 535–557, 867–889, 909–931, 968–990, and 1000–1022; these read LFILRPVATTLLMIAILLAGIIG, VQFELLLAIALVVMVIYLFLRNA, LIPSIAVPLSLVGTFAAMYFLGF, LMALTIATGFVVDDAIVVIENIA, IGFTIISLTFSLIAVLIPLLFMG, VTLAVSILISAVVSLTLTPMMCA, HPWLTLSVALGTLLLTILLYIWI, VWLIVAAIVAMYIVLGVLYESFI, LMMAGKDLDVIAIIGIILLIGIV, ILMTTMAALLSALPLMLSTGVGA, and MVGGLIMSQILTLFTTPVIYLLF.

The protein belongs to the resistance-nodulation-cell division (RND) (TC 2.A.6) family. MdtB subfamily. In terms of assembly, part of a tripartite efflux system composed of MdtA, MdtB and MdtC. MdtB forms a heteromultimer with MdtC.

It localises to the cell inner membrane. The sequence is that of Multidrug resistance protein MdtB from Pectobacterium atrosepticum (strain SCRI 1043 / ATCC BAA-672) (Erwinia carotovora subsp. atroseptica).